A 718-amino-acid polypeptide reads, in one-letter code: GMP synthase [glutamine-hydrolyzing] (718 aa).

The Glutamine amidotransferase type-1 domain maps to 43-247 (VIVILDAGSQ…LIDICGCSAN (205 aa)). Active-site for GATase activity residues include Cys-128, His-221, and Glu-223. In terms of domain architecture, GMPS ATP-PPase spans 248–457 (YTLDDREQQA…LGLSDSLVWR (210 aa)). 275-281 (SGGVDST) contributes to the ATP binding site.

As to quaternary structure, homodimer.

It catalyses the reaction XMP + L-glutamine + ATP + H2O = GMP + L-glutamate + AMP + diphosphate + 2 H(+). It functions in the pathway purine metabolism; GMP biosynthesis; GMP from XMP (L-Gln route): step 1/1. This is GMP synthase [glutamine-hydrolyzing] (guaA) from Dictyostelium discoideum (Social amoeba).